Consider the following 491-residue polypeptide: Subtilase-type proteinase RRT12 (491 aa).

The N-terminal stretch at 1 to 17 (MKPQCILISLLVNLAYA) is a signal peptide. N-linked (GlcNAc...) asparagine glycans are attached at residues asparagine 38, asparagine 64, asparagine 106, and asparagine 121. A Peptidase S8 domain is found at 142–442 (PFDVGDKDRY…FPRLNIEAIA (301 aa)). Residues aspartate 174 and histidine 205 each act as charge relay system in the active site. N-linked (GlcNAc...) asparagine glycosylation is found at asparagine 268 and asparagine 356. Serine 365 (charge relay system) is an active-site residue. Asparagine 449 carries N-linked (GlcNAc...) asparagine glycosylation.

This sequence belongs to the peptidase S8 family. In terms of processing, N-glycosylated.

The protein resides in the spore wall. In terms of biological role, subtilisin-related protease involved in the formation of a protective dityrosine layer required for spore wall assembly. Identified in a screen for mutants with increased levels of rDNA transcription. The polypeptide is Subtilase-type proteinase RRT12 (RRT12) (Saccharomyces cerevisiae (strain ATCC 204508 / S288c) (Baker's yeast)).